Consider the following 169-residue polypeptide: Required for excision 1-B domain-containing protein (169 aa).

This Mus musculus (Mouse) protein is Required for excision 1-B domain-containing protein.